The chain runs to 104 residues: Large ribosomal subunit protein bL21 (104 aa).

Belongs to the bacterial ribosomal protein bL21 family. As to quaternary structure, part of the 50S ribosomal subunit. Contacts protein L20.

Functionally, this protein binds to 23S rRNA in the presence of protein L20. This chain is Large ribosomal subunit protein bL21, found in Symbiobacterium thermophilum (strain DSM 24528 / JCM 14929 / IAM 14863 / T).